A 355-amino-acid chain; its full sequence is tRNA pseudouridine synthase D (355 aa).

The Nucleophile role is filled by D84. Residues 160–306 form the TRUD domain; sequence GVPNYFGLQR…MAHERRILRL (147 aa).

This sequence belongs to the pseudouridine synthase TruD family.

It carries out the reaction uridine(13) in tRNA = pseudouridine(13) in tRNA. Functionally, responsible for synthesis of pseudouridine from uracil-13 in transfer RNAs. The sequence is that of tRNA pseudouridine synthase D from Pseudomonas aeruginosa (strain LESB58).